We begin with the raw amino-acid sequence, 79 residues long: Small ribosomal subunit protein uS17 (79 aa).

Belongs to the universal ribosomal protein uS17 family. In terms of assembly, part of the 30S ribosomal subunit.

One of the primary rRNA binding proteins, it binds specifically to the 5'-end of 16S ribosomal RNA. In Caulobacter sp. (strain K31), this protein is Small ribosomal subunit protein uS17.